A 423-amino-acid chain; its full sequence is Histidine--tRNA ligase (423 aa).

It belongs to the class-II aminoacyl-tRNA synthetase family. As to quaternary structure, homodimer.

The protein resides in the cytoplasm. It catalyses the reaction tRNA(His) + L-histidine + ATP = L-histidyl-tRNA(His) + AMP + diphosphate + H(+). The polypeptide is Histidine--tRNA ligase (Haemophilus influenzae (strain 86-028NP)).